The chain runs to 295 residues: Cbb3-type cytochrome c oxidase subunit CcoP (295 aa).

Over 1-31 (MAQKEKDALSGVETTGHEWDGLRELNNPLPK) the chain is Cytoplasmic. The chain crosses the membrane as a helical span at residues 32–52 (WWLYIFYVCIAWSLVYYVLYP). Topologically, residues 53-295 (AWPLGKSYTK…VYVHNLGGGK (243 aa)) are periplasmic. Cytochrome c domains are found at residues 108–200 (FAMA…LSLN) and 207–292 (AAAE…HNLG). Residues cysteine 121, cysteine 124, histidine 125, methionine 175, cysteine 220, cysteine 223, histidine 224, and methionine 269 each contribute to the heme c site.

Belongs to the CcoP / FixP family. In terms of assembly, component of the cbb3-type cytochrome c oxidase at least composed of CcoN, CcoO, CcoQ and CcoP. Heme c is required as a cofactor.

The protein localises to the cell inner membrane. The protein operates within energy metabolism; oxidative phosphorylation. Functionally, C-type cytochrome. Part of the cbb3-type cytochrome c oxidase complex. CcoP subunit is required for transferring electrons from donor cytochrome c via its heme groups to CcoO subunit. From there, electrons are shuttled to the catalytic binuclear center of CcoN subunit where oxygen reduction takes place. The complex also functions as a proton pump. This Azospirillum brasilense protein is Cbb3-type cytochrome c oxidase subunit CcoP.